Consider the following 195-residue polypeptide: FMN-dependent NADH:quinone oxidoreductase (195 aa).

Residues Ser-9, 15-17 (SVS), 85-88 (MYNF), and 129-132 (SRGG) contribute to the FMN site.

It belongs to the azoreductase type 1 family. In terms of assembly, homodimer. FMN serves as cofactor.

The enzyme catalyses 2 a quinone + NADH + H(+) = 2 a 1,4-benzosemiquinone + NAD(+). It carries out the reaction N,N-dimethyl-1,4-phenylenediamine + anthranilate + 2 NAD(+) = 2-(4-dimethylaminophenyl)diazenylbenzoate + 2 NADH + 2 H(+). Its function is as follows. Quinone reductase that provides resistance to thiol-specific stress caused by electrophilic quinones. Functionally, also exhibits azoreductase activity. Catalyzes the reductive cleavage of the azo bond in aromatic azo compounds to the corresponding amines. The polypeptide is FMN-dependent NADH:quinone oxidoreductase (Stenotrophomonas maltophilia (strain K279a)).